Here is a 159-residue protein sequence, read N- to C-terminus: MEKLSSKDKELIRGSWDSLGKNKVPHGVILFSRLFELDPELLNLFHYTTNCGSTQDCLSSPEFLEHVTKVMLVIDAAVSHLDDLHSLEDFLLNLGRKHQAVGVKPQSFAMVGESLLYMLQCSLGQAYTASLRQAWLNMYSVVVASMSRGWAKNGEDKAD.

Positions 3–151 (KLSSKDKELI…VVASMSRGWA (149 aa)) constitute a Globin domain. Heme b-binding residues include His-66 and His-98.

Belongs to the globin family. In terms of assembly, monomer. Homodimers and homotetramers. Mainly monomeric but also detected as part of homodimers and homotetramers.

It is found in the cytoplasm. Its subcellular location is the cytosol. The protein localises to the mitochondrion matrix. The enzyme catalyses Fe(III)-heme b-[protein] + nitric oxide + H2O = Fe(II)-heme b-[protein] + nitrite + 2 H(+). Its function is as follows. Monomeric globin with a bis-histidyl six-coordinate heme-iron atom through which it can bind dioxygen, carbon monoxide and nitric oxide. Could help transport oxygen and increase its availability to the metabolically active neuronal tissues, though its low quantity in tissues as well as its high affinity for dioxygen, which may limit its oxygen-releasing ability, argue against it. The ferrous/deoxygenated form exhibits a nitrite reductase activity and it could produce nitric oxide which in turn inhibits cellular respiration in response to hypoxia. In its ferrous/deoxygenated state, it may also exhibit GDI (Guanine nucleotide Dissociation Inhibitor) activity toward heterotrimeric G-alpha proteins, thereby regulating signal transduction to facilitate neuroprotective responses in the wake of hypoxia and associated oxidative stress. This chain is Neuroglobin (ngb), found in Tetraodon nigroviridis (Spotted green pufferfish).